Here is a 261-residue protein sequence, read N- to C-terminus: Pimeloyl-[acyl-carrier protein] methyl ester esterase (261 aa).

In terms of domain architecture, AB hydrolase-1 spans 15–243 (HLVLLHGWGL…AAHAPFISHP (229 aa)). Residues Trp-22, 83–84 (SL), and 144–148 (FLALQ) each bind substrate. The active-site Nucleophile is Ser-83. Catalysis depends on residues Asp-208 and His-236. His-236 is a substrate binding site.

Belongs to the AB hydrolase superfamily. Carboxylesterase BioH family. As to quaternary structure, monomer.

The protein localises to the cytoplasm. It carries out the reaction 6-carboxyhexanoyl-[ACP] methyl ester + H2O = 6-carboxyhexanoyl-[ACP] + methanol + H(+). The protein operates within cofactor biosynthesis; biotin biosynthesis. The physiological role of BioH is to remove the methyl group introduced by BioC when the pimeloyl moiety is complete. It allows to synthesize pimeloyl-ACP via the fatty acid synthetic pathway through the hydrolysis of the ester bonds of pimeloyl-ACP esters. This is Pimeloyl-[acyl-carrier protein] methyl ester esterase from Proteus mirabilis (strain HI4320).